Consider the following 901-residue polypeptide: HTH-type transcriptional regulator MalT (901 aa).

ATP is bound at residue 39–46; the sequence is SPAGYGKT. Positions 829–894 constitute an HTH luxR-type domain; it reads ELIRTSPLTQ…DAVQHAQQLL (66 aa). Residues 853-872 constitute a DNA-binding region (H-T-H motif); the sequence is NEQIAGELDVAATTIKTHIR.

Belongs to the MalT family. As to quaternary structure, monomer in solution. Oligomerizes to an active state in the presence of the positive effectors ATP and maltotriose.

With respect to regulation, activated by ATP and maltotriose, which are both required for DNA binding. In terms of biological role, positively regulates the transcription of the maltose regulon whose gene products are responsible for uptake and catabolism of malto-oligosaccharides. Specifically binds to the promoter region of its target genes, recognizing a short DNA motif called the MalT box. The protein is HTH-type transcriptional regulator MalT of Klebsiella pneumoniae (strain 342).